The primary structure comprises 828 residues: Deubiquitinase MYSM1 (828 aa).

The span at 1–12 (MAAEEADVDIEG) shows a compositional bias: acidic residues. The disordered stretch occupies residues 1 to 31 (MAAEEADVDIEGDVVAAAGAQPGSGENTASV). Serine 110 is subject to Phosphoserine. The SANT domain maps to 116–167 (SYSVKWTIEEKELFEQGLAKFGRRWTKISKLIGSRTVLQVKSYARQYFKNKV). Lysine 187 participates in a covalent cross-link: Glycyl lysine isopeptide (Lys-Gly) (interchain with G-Cter in SUMO2). Serine 218 bears the Phosphoserine mark. A Phosphothreonine modification is found at threonine 236. Phosphoserine occurs at positions 242, 267, and 340. Residues 372–470 (LKPPEQEIEI…FGCEQAVYNR (99 aa)) enclose the SWIRM domain. The MPN domain maps to 577–709 (VKVASEALLI…PLPYSQITCL (133 aa)). Residues histidine 656, histidine 658, and aspartate 669 each coordinate Zn(2+). The JAMM motif motif lies at 656–669 (HSHPAFDPNPSLRD). The short motif at 774–778 (LQKLL) is the LXXLL motif element.

This sequence belongs to the peptidase M67A family. MYSM1 subfamily. In terms of assembly, component of a large chromatin remodeling complex, at least composed of MYSM1, PCAF, RBM10 and KIF11/TRIP5. Binds histones. Interacts with NFIL3; this interaction is critical for their correct recruitment to the ID2 locus during natural killer cell maturation.

It localises to the nucleus. Its subcellular location is the cytoplasm. Functionally, metalloprotease with deubiquitinase activity that plays important regulator roles in hematopoietic stem cell function, blood cell production and immune response. Participates in the normal programming of B-cell responses to antigen after the maturation process. Within the cytoplasm, plays critical roles in the repression of innate immunity and autoimmunity. Removes 'Lys-63'-linked polyubiquitins from TRAF3 and TRAF6 complexes. Attenuates NOD2-mediated inflammation and tissue injury by promoting 'Lys-63'-linked deubiquitination of RIPK2 component. Suppresses the CGAS-STING1 signaling pathway by cleaving STING1 'Lys-63'-linked ubiquitin chains. In the nucleus, acts as a hematopoietic transcription regulator derepressing a range of genes essential for normal stem cell differentiation including EBF1 and PAX5 in B-cells, ID2 in NK-cell progenitor or FLT3 in dendritic cell precursors. Deubiquitinates monoubiquitinated histone H2A, a specific tag for epigenetic transcriptional repression, leading to dissociation of histone H1 from the nucleosome. This chain is Deubiquitinase MYSM1 (MYSM1), found in Homo sapiens (Human).